We begin with the raw amino-acid sequence, 133 residues long: Large ribosomal subunit protein bL19 (133 aa).

It belongs to the bacterial ribosomal protein bL19 family.

In terms of biological role, this protein is located at the 30S-50S ribosomal subunit interface and may play a role in the structure and function of the aminoacyl-tRNA binding site. This Stenotrophomonas maltophilia (strain R551-3) protein is Large ribosomal subunit protein bL19.